We begin with the raw amino-acid sequence, 1362 residues long: DNA-directed RNA polymerase subunit beta (1362 aa).

The protein belongs to the RNA polymerase beta chain family. In terms of assembly, the RNAP catalytic core consists of 2 alpha, 1 beta, 1 beta' and 1 omega subunit. When a sigma factor is associated with the core the holoenzyme is formed, which can initiate transcription.

It carries out the reaction RNA(n) + a ribonucleoside 5'-triphosphate = RNA(n+1) + diphosphate. DNA-dependent RNA polymerase catalyzes the transcription of DNA into RNA using the four ribonucleoside triphosphates as substrates. This is DNA-directed RNA polymerase subunit beta from Parvibaculum lavamentivorans (strain DS-1 / DSM 13023 / NCIMB 13966).